Consider the following 399-residue polypeptide: MSIRYIDEIENLSGKKLFMRVDFNVPLDDHQNITEDTRIRAVLPSINYALDQKAKIILASHLGRPKGERKEKYSMAPAAKRLSRLLGKEVKLASDCIGDEVKAMINAMQPGDVIMLENVRFYAGEEKNDADFAKALANDCDVYVNDAFAVSHRAHASVEAITNCFPVVAAGFLMKNEMNYFEKAMKNPIRPLVAILGGAKVSGKIEVLENLCDKVDKIIIGGGMAFTFLKGMGYNVGKSLVEDNLIDTAMKTYEKARAQGVKFYLPVDCVVADQFNPAAETKVCPIQEIPEGWMALDVGPATVTLFTEALQNAKTIVWNGPMGVFEMDAFSRGTFAMVSAVANSYALTIVGGGDTDVAVHRAGEYAKISYISTGGGAFLELLEGKKLPGIKVLEDKGHQ.

Substrate is bound by residues 22–24, Arg38, 61–64, Arg120, and Arg153; these read DFN and HLGR. Residues Lys204, Glu326, and 352–355 contribute to the ATP site; that span reads GGDT.

This sequence belongs to the phosphoglycerate kinase family. In terms of assembly, monomer.

It localises to the cytoplasm. The catalysed reaction is (2R)-3-phosphoglycerate + ATP = (2R)-3-phospho-glyceroyl phosphate + ADP. It functions in the pathway carbohydrate degradation; glycolysis; pyruvate from D-glyceraldehyde 3-phosphate: step 2/5. This is Phosphoglycerate kinase from Citrifermentans bemidjiense (strain ATCC BAA-1014 / DSM 16622 / JCM 12645 / Bem) (Geobacter bemidjiensis).